The sequence spans 466 residues: Vimentin (466 aa).

Low complexity-rich tracts occupy residues 1–13 (MSTRSVSSSSYRR) and 20–33 (TSSRPSSNRSYVTT). The segment at 1-33 (MSTRSVSSSSYRRMFGGSGTSSRPSSNRSYVTT) is disordered. An N-acetylserine modification is found at serine 2. The segment at 2 to 95 (STRSVSSSSY…FSLADAINTE (94 aa)) is head. Position 5 is a phosphoserine (serine 5). The residue at position 7 (serine 7) is a Phosphoserine; by PKA and PKC; alternate. Residue serine 7 is glycosylated (O-linked (GlcNAc) serine; alternate). Serine 8 bears the Phosphoserine mark. Serine 9 and serine 10 each carry phosphoserine; by PKC. The residue at position 20 (threonine 20) is a Phosphothreonine. 2 positions are modified to phosphoserine: serine 25 and serine 26. The O-linked (GlcNAc) threonine glycan is linked to threonine 33. An O-linked (GlcNAc) serine; alternate glycan is attached at serine 34. The residue at position 34 (serine 34) is a Phosphoserine; by PKC; alternate. Serine 39 is modified (phosphoserine; by CaMK2, PKA, PKC and ROCK2). The residue at position 42 (serine 42) is a Phosphoserine; by PKC. Position 47 is a phosphoserine; by PKA (serine 47). Serine 49 and serine 51 each carry phosphoserine. Position 53 is a phosphotyrosine (tyrosine 53). Residues serine 55 and serine 56 each carry the phosphoserine modification. Tyrosine 61 carries the post-translational modification Phosphotyrosine. Serine 66 carries the post-translational modification Phosphoserine; by PKA and PKC. At serine 72 the chain carries Phosphoserine; by AURKB and ROCK2. Residues serine 73, serine 83, and serine 87 each carry the phosphoserine modification. The segment at 96 to 131 (FKNTRTNEKVELQELNDRFANYIDKVRFLEQQNKIL) is coil 1A. A coiled-coil region spans residues 96–131 (FKNTRTNEKVELQELNDRFANYIDKVRFLEQQNKIL). One can recognise an IF rod domain in the interval 103–411 (EKVELQELND…KLLEGEESRI (309 aa)). A Glycyl lysine isopeptide (Lys-Gly) (interchain with G-Cter in SUMO2) cross-link involves residue lysine 104. The residue at position 117 (tyrosine 117) is a Phosphotyrosine. Residues lysine 120, lysine 129, and lysine 139 each carry the N6-acetyllysine; alternate modification. N6-succinyllysine; alternate occurs at positions 120 and 129. Glycyl lysine isopeptide (Lys-Gly) (interchain with G-Cter in SUMO2); alternate cross-links involve residues lysine 120, lysine 129, and lysine 139. A linker 1 region spans residues 132 to 153 (LAELEQLKGQGKSRLGDLYEEE). The residue at position 144 (serine 144) is a Phosphoserine. Positions 154-245 (MRELRRQVDQ…KLHDEEIQEL (92 aa)) form a coiled coil. The coil 1B stretch occupies residues 154–245 (MRELRRQVDQ…KLHDEEIQEL (92 aa)). Residue lysine 168 is modified to N6-acetyllysine. Lysine 188 is modified (N6-acetyllysine; alternate). Lysine 188 is subject to N6-succinyllysine; alternate. Residue serine 214 is modified to Phosphoserine. Lysine 223 carries the post-translational modification N6-acetyllysine; alternate. Residue lysine 223 forms a Glycyl lysine isopeptide (Lys-Gly) (interchain with G-Cter in SUMO2); alternate linkage. Phosphoserine is present on serine 226. Residue lysine 235 is modified to N6-acetyllysine. The linker 12 stretch occupies residues 246–268 (QAQIQEQHVQIDVDVSKPDLTAA). A Glycyl lysine isopeptide (Lys-Gly) (interchain with G-Cter in SUMO2) cross-link involves residue lysine 262. A coil 2 region spans residues 269–407 (LRDVRQQYES…ATYRKLLEGE (139 aa)). N6-acetyllysine; alternate is present on lysine 294. Lysine 294 carries the N6-succinyllysine; alternate modification. A Glycyl lysine isopeptide (Lys-Gly) (interchain with G-Cter in SUMO2); alternate cross-link involves residue lysine 294. Serine 299 carries the phosphoserine modification. Positions 303–407 (NRNNDALRQA…ATYRKLLEGE (105 aa)) form a coiled coil. Lysine 313 participates in a covalent cross-link: Glycyl lysine isopeptide (Lys-Gly) (interchain with G-Cter in SUMO2). Serine 325 carries the post-translational modification Phosphoserine. The [IL]-x-C-x-x-[DE] motif motif lies at 326-329 (LTCE). Lysine 373 bears the N6-acetyllysine; alternate mark. A Glycyl lysine isopeptide (Lys-Gly) (interchain with G-Cter in SUMO2); alternate cross-link involves residue lysine 373. The segment at 408–466 (ESRISLPLPNFSSLNLRETNLESLPLVDTHSKRTLLIKTVETRDGQVINETSQHHDDLE) is tail. Phosphoserine occurs at positions 409, 412, 419, and 420. Threonine 426 carries the phosphothreonine modification. Serine 430 carries the post-translational modification Phosphoserine. Threonine 436 carries the phosphothreonine modification. Serine 438 is modified (phosphoserine). A Glycyl lysine isopeptide (Lys-Gly) (interchain with G-Cter in SUMO2) cross-link involves residue lysine 439. Lysine 445 is modified (N6-acetyllysine; alternate). N6-succinyllysine; alternate is present on lysine 445. Residue lysine 445 forms a Glycyl lysine isopeptide (Lys-Gly) (interchain with G-Cter in SUMO2); alternate linkage. A Glycyl lysine isopeptide (Lys-Gly) (interchain with G-Cter in SUMO1); alternate cross-link involves residue lysine 445. Phosphothreonine occurs at positions 446 and 458. Serine 459 is subject to Phosphoserine.

This sequence belongs to the intermediate filament family. Homomer assembled from elementary dimers. Identified in complexes that contain VIM, EZR, AHNAK, BFSP1, BFSP2, ANK2, PLEC, PRX and spectrin. Interacts with BCAS3. Interacts with LGSN. Interacts with SYNM. Interacts (via rod region) with PLEC (via CH 1 domain). Interacts with STK33. Interacts with LARP6. Interacts with RAB8B. Interacts with TOR1A; the interaction associates TOR1A with the cytoskeleton. Interacts with TOR1AIP1. Interacts with TOR1AIP1. Interacts with DIAPH1. Interacts with EPPK1; interaction is dependent of higher-order structure of intermediate filament. Interacts with the non-receptor tyrosine kinase SRMS; the interaction leads to phosphorylation of VIM. Interacts with NOD2. Interacts (via head region) with CORO1C. Interacts with HDGF. Interacts with PRKCE (via phorbol-ester/DAG-type 2 domain). Interacts with BFSP2. Interacts with PPL. Interacts with PKP1 and PKP2. Interacts with SCRIB (via PDZ domains); the interaction protects SCRIB from proteasomal degradation and facilitates SCRIB localization to intermediate filaments, the interaction is reduced by cell contact inhibition. Post-translationally, one of the most prominent phosphoproteins in various cells of mesenchymal origin. Phosphorylation is enhanced during cell division, at which time vimentin filaments are significantly reorganized. Phosphorylation by PKN1 inhibits the formation of filaments. Filament disassembly during mitosis is promoted by phosphorylation at Ser-55 as well as by nestin. Phosphorylated at Ser-56 by CDK5 during neutrophil secretion in the cytoplasm. Phosphorylated by STK33. Phosphorylated on tyrosine residues by SRMS. In terms of processing, S-nitrosylation is induced by interferon-gamma and oxidatively-modified low-densitity lipoprotein (LDL(ox)) possibly implicating the iNOS-S100A8/9 transnitrosylase complex.

The protein resides in the cytoplasm. It localises to the cytoskeleton. It is found in the nucleus matrix. Its subcellular location is the cell membrane. Vimentins are class-III intermediate filaments found in various non-epithelial cells, especially mesenchymal cells. Vimentin is attached to the nucleus, endoplasmic reticulum, and mitochondria, either laterally or terminally. Plays a role in cell directional movement, orientation, cell sheet organization and Golgi complex polarization at the cell migration front. Protects SCRIB from proteasomal degradation and facilitates its localization to intermediate filaments in a cell contact-mediated manner. Its function is as follows. Involved with LARP6 in the stabilization of type I collagen mRNAs for CO1A1 and CO1A2. This is Vimentin from Rattus norvegicus (Rat).